Here is a 78-residue protein sequence, read N- to C-terminus: MSDIAERVKKIVIDHLGVDADKVVESASFIDDLGADSLDTVELVMAFEEEFGVEIPDDAADSILTVGDAVKFIEKAQA.

The region spanning 2–77 (SDIAERVKKI…DAVKFIEKAQ (76 aa)) is the Carrier domain. An O-(pantetheine 4'-phosphoryl)serine modification is found at serine 37.

This sequence belongs to the acyl carrier protein (ACP) family. 4'-phosphopantetheine is transferred from CoA to a specific serine of apo-ACP by AcpS. This modification is essential for activity because fatty acids are bound in thioester linkage to the sulfhydryl of the prosthetic group.

Its subcellular location is the cytoplasm. The protein operates within lipid metabolism; fatty acid biosynthesis. Its function is as follows. Carrier of the growing fatty acid chain in fatty acid biosynthesis. The polypeptide is Acyl carrier protein (Rhizobium etli (strain CIAT 652)).